The following is a 187-amino-acid chain: Threonylcarbamoyl-AMP synthase (187 aa).

A YrdC-like domain is found at Thr4 to Asp187.

Belongs to the SUA5 family. TsaC subfamily.

The protein localises to the cytoplasm. The enzyme catalyses L-threonine + hydrogencarbonate + ATP = L-threonylcarbamoyladenylate + diphosphate + H2O. In terms of biological role, required for the formation of a threonylcarbamoyl group on adenosine at position 37 (t(6)A37) in tRNAs that read codons beginning with adenine. Catalyzes the conversion of L-threonine, HCO(3)(-)/CO(2) and ATP to give threonylcarbamoyl-AMP (TC-AMP) as the acyladenylate intermediate, with the release of diphosphate. In Xanthomonas euvesicatoria pv. vesicatoria (strain 85-10) (Xanthomonas campestris pv. vesicatoria), this protein is Threonylcarbamoyl-AMP synthase.